The following is a 526-amino-acid chain: Cytochrome P450 monooxygenase 226 (526 aa).

Residues 15-35 form a helical membrane-spanning segment; it reads FATSYAALTVAAVTLLAALLV. Asn219, Asn277, and Asn320 each carry an N-linked (GlcNAc...) asparagine glycan. Cys452 contributes to the heme binding site.

Belongs to the cytochrome P450 family. The cofactor is heme.

Its subcellular location is the membrane. The protein operates within secondary metabolite biosynthesis. Functionally, cytochrome P450 monooxygenase that is able to use anthracene, carbazole and phenanthrene as substrates for oxidation. These multifunctional properties against a series of polycyclic aromatic hydrocarbons (PAHs) suggest that CYP226 would play important roles, at least in part, in fungal metabolic systems involved in xenobiotic detoxification. In Postia placenta (strain ATCC 44394 / Madison 698-R) (Brown rot fungus), this protein is Cytochrome P450 monooxygenase 226.